The following is a 215-amino-acid chain: MSGSYAPIEDSADELSVHSGNDNEIDLEKGLLPKCNTGNGGTTPCSEPPHYDSDAVVEMDMYENNIYMRTFKLRPFAKSGVTNSSNVVFQMKTYENNRHMQTFRLRPFAKNGVTNGVKLAQSLFLLLPFNFIFFACLFFRKASFTDFSLMGWILFGIWCLTCFLSSFILYAYHESWTKFARERSQEFSLILFGLLFPGIVTMVVFYALYMRSMYG.

The segment at 1–21 is disordered; sequence MSGSYAPIEDSADELSVHSGN. Helical transmembrane passes span 119-139, 149-169, and 189-209; these read LAQS…CLFF, LMGW…SFIL, and LILF…YALY.

This sequence belongs to the WTF family.

It localises to the spore membrane. Functionally, may act in meiotic drive. The protein is Wtf element wtf7 of Schizosaccharomyces pombe (strain 972 / ATCC 24843) (Fission yeast).